The chain runs to 203 residues: Large ribosomal subunit protein bL25 (203 aa).

Belongs to the bacterial ribosomal protein bL25 family. CTC subfamily. Part of the 50S ribosomal subunit; part of the 5S rRNA/L5/L18/L25 subcomplex. Contacts the 5S rRNA. Binds to the 5S rRNA independently of L5 and L18.

Functionally, this is one of the proteins that binds to the 5S RNA in the ribosome where it forms part of the central protuberance. This chain is Large ribosomal subunit protein bL25, found in Cupriavidus metallidurans (strain ATCC 43123 / DSM 2839 / NBRC 102507 / CH34) (Ralstonia metallidurans).